A 53-amino-acid polypeptide reads, in one-letter code: Kunitz-type trypsin inhibitor alpha chain (53 aa).

Residues 33 to 53 (GWGLPRRTGDESCPLNVKAVR) form a disordered region.

The protein belongs to the protease inhibitor I3 (leguminous Kunitz-type inhibitor) family. In terms of assembly, heterodimer of an alpha and a beta chain linked by a disulfide bond.

Its function is as follows. Inhibits trypsin with a Ki of 0.25 uM. Inhibits the trypsin-like proteases in midguts of larval H.armigera, S.exigua, and P.rapae. The chain is Kunitz-type trypsin inhibitor alpha chain from Albizia kalkora (Kalkora mimosa).